We begin with the raw amino-acid sequence, 1446 residues long: MAHSKTRTNDGKITYPPGVKEISDKISKEEMVRRLKMVVKTFMDMDQDSEEEKELYLNLALHLASDFFLKHPDKDVRLLVACCLADIFRIYAPEAPYTSPDKLKDIFMFITRQLKGLEDTKSPQFNRYFYLLENIAWVKSYNICFELEDSNEIFTQLYRTLFSVINNGHNQKVHMHMVDLMSSIICEGDTVSQELLDTVLVNLVPAHKNLNKQAYDLAKALLKRTAQAIEPYITNFFNQVLMLGKTSISDLSEHVFDLILELYNIDSHLLLSVLPQLEFKLKSNDNEERLQVVKLLAKMFGAKDSELASQNKPLWQCYLGRFNDIHVPIRLECVKFASHCLMNHPDLAKDLTEYLKVRSHDPEEAIRHDVIVSIVTAAKKDILLVNDHLLNFVRERTLDKRWRVRKEAMMGLAQIYKKYSLQSAAGKDAAKQISWVKDKLLHIYYQNSIDDRLLVERIFAQYMVPHNLETTERMKCLYYLYATLDLNAVKALNEMWKCQNLLRHQVKDLLDLIKQPKTDASVKAIFSKVMVITRNLPDPGKAQDFMKKFTQVLEDDEKIRKQLEALVSPTCSCKQAEGCVREITKKLGNPKQPTNPFLEMIKFLLERIAPVHIDTESISALIKQVNKSIDGTADDEDEGVPTDQAIRAGLELLKVLSFTHPISFHSAETFESLLACLKMDDEKVAEAALQIFKNTGSKIEEDFPHIRSALLPVLHHKSKKGPPRQAKYAIHCIHAIFSSKETQFAQIFEPLHKSLDPSNLEHLITPLVTIGHIALLAPDQFAAPLKSLVATFIVKDLLMNDRLPGKKTTKLWVPDEEVSPETMVKIQAIKMMVRWLLGMKNNHSKSGTSTLRLLTTILHSDGDLTEQGKISKPDMSRLRLAAGSAIVKLAQEPCYHEIITLEQYQLCALAINDECYQVRQVFAQKLHKGLSRLRLPLEYMAICALCAKDPVKERRAHARQCLVKNITVRREYLKQHAAVSEKLLSLLPEYVVPYTIHLLAHDPDYVKVQDIEQLKDVKECLWFVLEILMAKNENNSHAFIRKMVENIKQTKDAQGPDDTKMNEKLYTVCDVAMNIIMSKSTTYSLESPKDPVLPARFFTQPDKNFSNTKNYLPPEMKSFFTPGKPKTANVLGAVNKPLSSAGKQSQTKSSRMETVSNASSSSNPSSPGRIKGRLDSSEMDHSENEDYTMSSPLPGKKSDKREDPDLSELEKPRSRKKAPVTDPEEKLGMDDLTKLVQEQKPKGSQRGRKRGRTASDSDEQQWPEEKRHKEELLENEDEQNSPPKKGKRGRPPKPLGGGTSKEEPTMKTSKKGNKKKLVPPVVDDDEEEERQIGNTEHKSKSKQHRTSKRAQQRAESPETSAVESTQSTPQKGRGRPSKAPSPSQPPKKIRVGRSKQVATKENDSSEEMDVLQASSPVSDDTTQEGAEEEDISVGNVRRRSSKRERR.

The HEAT repeat unit spans residues 383 to 419 (LLVNDHLLNFVRERTLDKRWRVRKEAMMGLAQIYKKY). K1136 bears the N6-acetyllysine mark. Positions 1137–1155 (PLSSAGKQSQTKSSRMETV) are enriched in polar residues. The interval 1137–1446 (PLSSAGKQSQ…RRRSSKRERR (310 aa)) is disordered. Residues S1140, S1162, S1166, S1176, S1182, and S1191 each carry the phosphoserine modification. Residues 1156 to 1167 (SNASSSSNPSSP) show a composition bias toward low complexity. Positions 1172 to 1184 (GRLDSSEMDHSEN) are enriched in basic and acidic residues. 2 stretches are compositionally biased toward basic and acidic residues: residues 1196 to 1212 (KKSD…LEKP) and 1223 to 1241 (PEEK…EQKP). Basic residues predominate over residues 1243 to 1252 (GSQRGRKRGR). The a.T hook 1 DNA-binding region spans 1247–1259 (GRKRGRTASDSDE). T1253 carries the post-translational modification Phosphothreonine. S1255 and S1257 each carry phosphoserine. Over residues 1263–1272 (PEEKRHKEEL) the composition is skewed to basic and acidic residues. The residue at position 1281 (S1281) is a Phosphoserine. Positions 1285-1297 (KGKRGRPPKPLGG) form a DNA-binding region, a.T hook 2. Basic residues-rich tracts occupy residues 1308-1317 (TSKKGNKKKL) and 1339-1351 (SKSK…KRAQ). Positions 1353–1370 (RAESPETSAVESTQSTPQ) are enriched in polar residues. Phosphoserine occurs at positions 1356 and 1364. A Phosphothreonine modification is found at T1365. At S1367 the chain carries Phosphoserine. T1368 carries the post-translational modification Phosphothreonine. The a.T hook 3 DNA-binding region spans 1370–1382 (QKGRGRPSKAPSP). Phosphoserine is present on residues S1381, S1415, and S1418. The span at 1421-1431 (TTQEGAEEEDI) shows a compositional bias: acidic residues. The segment covering 1436–1446 (VRRRSSKRERR) has biased composition (basic residues).

This sequence belongs to the PDS5 family. As to quaternary structure, interacts with the cohesin complex. Interacts with RAD21; the interaction is direct. Interacts with WAPL (via FGF motifs) or CDCA5 (via the FGF motif); the interaction is direct, cohesin-dependent and competitive. As to expression, expressed in prostate.

It localises to the nucleus. Functionally, regulator of sister chromatid cohesion in mitosis which may stabilize cohesin complex association with chromatin. May couple sister chromatid cohesion during mitosis to DNA replication. Cohesion ensures that chromosome partitioning is accurate in both meiotic and mitotic cells and plays an important role in DNA repair. Plays a role in androgen-induced proliferative arrest in prostate cells. The chain is Sister chromatid cohesion protein PDS5 homolog B (Pds5b) from Mus musculus (Mouse).